The chain runs to 114 residues: Gonadotropin subunit beta-1 (114 aa).

An N-terminal signal peptide occupies residues 1-19 (MQLVLMAAVLALAEVGCFG). Cystine bridges form between C20/C66, C32/C80, C37/C114, C43/C92, C47/C94, and C97/C104. N24 is a glycosylation site (N-linked (GlcNAc...) asparagine).

It belongs to the glycoprotein hormones subunit beta family. Heterodimer of an alpha and a beta chain.

It is found in the secreted. In terms of biological role, involved in gametogenesis and steroidogenesis. In Fundulus heteroclitus (Killifish), this protein is Gonadotropin subunit beta-1 (cgba).